A 363-amino-acid polypeptide reads, in one-letter code: NAD(P)H-quinone oxidoreductase subunit 1, chloroplastic (363 aa).

The next 9 membrane-spanning stretches (helical) occupy residues 30-50 (LVPI…IVWL), 98-118 (FSIG…VIPF), 129-149 (IGVF…LMSG), 165-185 (AAQS…ISLL), 203-223 (LWGW…ISSL), 248-268 (YSGI…LVSS), 269-289 (LFVT…IFVP), 300-320 (VFGT…FLFI), and 334-354 (DQLL…NLLL).

This sequence belongs to the complex I subunit 1 family. In terms of assembly, NDH is composed of at least 16 different subunits, 5 of which are encoded in the nucleus.

The protein localises to the plastid. It localises to the chloroplast thylakoid membrane. The catalysed reaction is a plastoquinone + NADH + (n+1) H(+)(in) = a plastoquinol + NAD(+) + n H(+)(out). It catalyses the reaction a plastoquinone + NADPH + (n+1) H(+)(in) = a plastoquinol + NADP(+) + n H(+)(out). Functionally, NDH shuttles electrons from NAD(P)H:plastoquinone, via FMN and iron-sulfur (Fe-S) centers, to quinones in the photosynthetic chain and possibly in a chloroplast respiratory chain. The immediate electron acceptor for the enzyme in this species is believed to be plastoquinone. Couples the redox reaction to proton translocation, and thus conserves the redox energy in a proton gradient. The protein is NAD(P)H-quinone oxidoreductase subunit 1, chloroplastic of Oenothera elata subsp. hookeri (Hooker's evening primrose).